Consider the following 110-residue polypeptide: Toxin HigB-2 (110 aa).

Its function is as follows. Toxic component of a type II toxin-antitoxin (TA) system. Inhibits translation by cleavage of mRNA. This is Toxin HigB-2 (higB-2) from Vibrio cholerae serotype O1 (strain ATCC 39315 / El Tor Inaba N16961).